Here is a 389-residue protein sequence, read N- to C-terminus: Chalcone synthase 8 (389 aa).

C164 is an active-site residue.

This sequence belongs to the thiolase-like superfamily. Chalcone/stilbene synthases family.

The enzyme catalyses (E)-4-coumaroyl-CoA + 3 malonyl-CoA + 3 H(+) = 2',4,4',6'-tetrahydroxychalcone + 3 CO2 + 4 CoA. The protein operates within secondary metabolite biosynthesis; flavonoid biosynthesis. The primary product of this enzyme is 4,2',4',6'-tetrahydroxychalcone (also termed naringenin-chalcone or chalcone) which can under specific conditions spontaneously isomerize into naringenin. In Medicago sativa (Alfalfa), this protein is Chalcone synthase 8 (CHS8).